We begin with the raw amino-acid sequence, 281 residues long: MTWKIIADSGCDYRQLPTPAINTTFVSVPLTIQVADQVFVDDASLDIDQMMETMYATAEASKSACPSPDDYLRAFEGAKNIFLVTITGTLSGSHNSAQLAKNIYLEDHPDTKIHVIDSLSAGGEVDLLVEKLNDLIDQGLSFEEVVEAITAYQEKTKLLFVLAKVDNLVKNGRLSKLIGTVVGLLNIRMVGKASETGTLELLQKARGSKKSVQAAYDELVKAGYAGGRIVMAQRNNEKCCQQLSERIRETFPQADIKILPTSGLCSFYAEEGGLLMGYEID.

The DegV domain occupies 3–280 (WKIIADSGCD…EGGLLMGYEI (278 aa)). Residues S63 and S91 each coordinate hexadecanoate.

Its function is as follows. May bind long-chain fatty acids, such as palmitate, and may play a role in lipid transport or fatty acid metabolism. This chain is DegV domain-containing protein spr0652, found in Streptococcus pneumoniae (strain ATCC BAA-255 / R6).